The sequence spans 235 residues: tRNA (guanine-N(1)-)-methyltransferase (235 aa).

S-adenosyl-L-methionine-binding positions include Gly-114 and 134–139 (VGDYIL).

The protein belongs to the RNA methyltransferase TrmD family. In terms of assembly, homodimer.

It is found in the cytoplasm. The catalysed reaction is guanosine(37) in tRNA + S-adenosyl-L-methionine = N(1)-methylguanosine(37) in tRNA + S-adenosyl-L-homocysteine + H(+). Its function is as follows. Specifically methylates guanosine-37 in various tRNAs. In Chelativorans sp. (strain BNC1), this protein is tRNA (guanine-N(1)-)-methyltransferase.